Reading from the N-terminus, the 118-residue chain is Large ribosomal subunit protein uL18 (118 aa).

Belongs to the universal ribosomal protein uL18 family. As to quaternary structure, part of the 50S ribosomal subunit; part of the 5S rRNA/L5/L18/L25 subcomplex. Contacts the 5S and 23S rRNAs.

Its function is as follows. This is one of the proteins that bind and probably mediate the attachment of the 5S RNA into the large ribosomal subunit, where it forms part of the central protuberance. The protein is Large ribosomal subunit protein uL18 of Mycoplasmopsis pulmonis (strain UAB CTIP) (Mycoplasma pulmonis).